The chain runs to 145 residues: 3-dehydroquinate dehydratase (145 aa).

Tyr23 functions as the Proton acceptor in the catalytic mechanism. 3 residues coordinate substrate: Asn75, His81, and Asp88. The Proton donor role is filled by His101. Residues 102 to 103 and Arg112 each bind substrate; that span reads LS.

This sequence belongs to the type-II 3-dehydroquinase family. As to quaternary structure, homododecamer.

It catalyses the reaction 3-dehydroquinate = 3-dehydroshikimate + H2O. It functions in the pathway metabolic intermediate biosynthesis; chorismate biosynthesis; chorismate from D-erythrose 4-phosphate and phosphoenolpyruvate: step 3/7. Functionally, catalyzes a trans-dehydration via an enolate intermediate. This Legionella pneumophila (strain Lens) protein is 3-dehydroquinate dehydratase.